The primary structure comprises 105 residues: Chloroacetanilide N-alkylformylase 2, ferredoxin component (105 aa).

Residues 2–105 form the 2Fe-2S ferredoxin-type domain; the sequence is PKLVVVTREG…GLTVTIAPED (104 aa). [2Fe-2S] cluster contacts are provided by cysteine 40, cysteine 46, cysteine 49, and cysteine 86.

Belongs to the adrenodoxin/putidaredoxin family. The chloroacetanilide N-alkylformylase multicomponent enzyme system is composed of an oxygenase component (CndA) and an electron transfer component formed by a ferredoxin reductase (CndC1) and a ferredoxin (CndB1). In vitro, chloroacetanilide N-alkylformylase assays in which CndB1 is substituted for CndB2 demonstrate that the two enzymes possess nearly identical activities. The cofactor is [2Fe-2S] cluster.

In terms of biological role, component of the chloroacetanilide N-alkylformylase multicomponent enzyme system involved in the degradation of chloroacetanilide herbicides (N-alkoxyalkyl-N-chloroacetyl-substituted aniline derivatives). In vitro, functions as an intermediate electron transfer protein. The protein is Chloroacetanilide N-alkylformylase 2, ferredoxin component of Rhizorhabdus wittichii (strain DC-6 / KACC 16600) (Sphingomonas wittichii).